Reading from the N-terminus, the 405-residue chain is 1-deoxy-D-xylulose 5-phosphate reductoisomerase (405 aa).

NADPH-binding residues include Thr-16, Gly-17, Ser-18, Ile-19, Gly-42, Arg-43, Asn-44, and Asn-130. A 1-deoxy-D-xylulose 5-phosphate-binding site is contributed by Lys-131. Glu-132 provides a ligand contact to NADPH. Asp-156 serves as a coordination point for Mn(2+). 1-deoxy-D-xylulose 5-phosphate contacts are provided by Ser-157, Glu-158, Ser-192, and His-215. Glu-158 is a binding site for Mn(2+). Gly-221 contributes to the NADPH binding site. 1-deoxy-D-xylulose 5-phosphate contacts are provided by Ser-228, Asn-233, Lys-234, and Glu-237. Glu-237 contacts Mn(2+).

Belongs to the DXR family. It depends on Mg(2+) as a cofactor. The cofactor is Mn(2+).

The catalysed reaction is 2-C-methyl-D-erythritol 4-phosphate + NADP(+) = 1-deoxy-D-xylulose 5-phosphate + NADPH + H(+). It participates in isoprenoid biosynthesis; isopentenyl diphosphate biosynthesis via DXP pathway; isopentenyl diphosphate from 1-deoxy-D-xylulose 5-phosphate: step 1/6. Catalyzes the NADPH-dependent rearrangement and reduction of 1-deoxy-D-xylulose-5-phosphate (DXP) to 2-C-methyl-D-erythritol 4-phosphate (MEP). This chain is 1-deoxy-D-xylulose 5-phosphate reductoisomerase, found in Pasteurella multocida (strain Pm70).